A 417-amino-acid chain; its full sequence is Serine hydroxymethyltransferase (417 aa).

N6-acetyllysine is present on K54. (6S)-5,6,7,8-tetrahydrofolate-binding positions include L121 and 125–127; that span reads GHL. An N6-(pyridoxal phosphate)lysine modification is found at K229. An N6-acetyllysine mark is found at K250, K285, and K354. 355 to 357 contacts (6S)-5,6,7,8-tetrahydrofolate; sequence SPF. K375 is modified (N6-acetyllysine).

It belongs to the SHMT family. In terms of assembly, homodimer. The cofactor is pyridoxal 5'-phosphate.

It is found in the cytoplasm. The catalysed reaction is (6R)-5,10-methylene-5,6,7,8-tetrahydrofolate + glycine + H2O = (6S)-5,6,7,8-tetrahydrofolate + L-serine. It functions in the pathway one-carbon metabolism; tetrahydrofolate interconversion. It participates in amino-acid biosynthesis; glycine biosynthesis; glycine from L-serine: step 1/1. Its function is as follows. Catalyzes the reversible interconversion of serine and glycine with tetrahydrofolate (THF) serving as the one-carbon carrier. This reaction serves as the major source of one-carbon groups required for the biosynthesis of purines, thymidylate, methionine, and other important biomolecules. Also exhibits THF-independent aldolase activity toward beta-hydroxyamino acids, producing glycine and aldehydes, via a retro-aldol mechanism. The protein is Serine hydroxymethyltransferase of Escherichia coli O17:K52:H18 (strain UMN026 / ExPEC).